The following is a 193-amino-acid chain: Mediator of RNA polymerase II transcription subunit 11 (193 aa).

A coiled-coil region spans residues 31-68 (AREIMQDLGKEKQISKNKMDDNANSFKKLITQVENELS). The tract at residues 115 to 193 (IEPPTQEVDE…EEEEGEQMEN (79 aa)) is disordered. The span at 121–143 (EVDEDNEDEEDSGDADMLEETPE) shows a compositional bias: acidic residues. A compositionally biased stretch (low complexity) spans 150 to 175 (TTSSSATTSDGGSGGADDAASSSAPR). The span at 184-193 (EEEEGEQMEN) shows a compositional bias: acidic residues.

This sequence belongs to the Mediator complex subunit 11 family. In terms of assembly, component of the Mediator complex.

It localises to the nucleus. Its function is as follows. Component of the Mediator complex, a coactivator involved in the regulated transcription of nearly all RNA polymerase II-dependent genes. Mediator functions as a bridge to convey information from gene-specific regulatory proteins to the basal RNA polymerase II transcription machinery. Mediator is recruited to promoters by direct interactions with regulatory proteins and serves as a scaffold for the assembly of a functional pre-initiation complex with RNA polymerase II and the general transcription factors. This is Mediator of RNA polymerase II transcription subunit 11 (mdt-11) from Caenorhabditis briggsae.